A 257-amino-acid chain; its full sequence is Hydroxyacylglutathione hydrolase (257 aa).

Positions 54, 56, 58, 59, 113, 137, and 175 each coordinate Zn(2+).

This sequence belongs to the metallo-beta-lactamase superfamily. Glyoxalase II family. Monomer. It depends on Zn(2+) as a cofactor.

It carries out the reaction an S-(2-hydroxyacyl)glutathione + H2O = a 2-hydroxy carboxylate + glutathione + H(+). It participates in secondary metabolite metabolism; methylglyoxal degradation; (R)-lactate from methylglyoxal: step 2/2. Functionally, thiolesterase that catalyzes the hydrolysis of S-D-lactoyl-glutathione to form glutathione and D-lactic acid. The polypeptide is Hydroxyacylglutathione hydrolase (Synechocystis sp. (strain ATCC 27184 / PCC 6803 / Kazusa)).